The chain runs to 875 residues: Protein translocase subunit SecA (875 aa).

ATP is bound by residues Q87, 105–109 (GEGKT), and D512. C860, C862, C871, and H872 together coordinate Zn(2+).

Belongs to the SecA family. As to quaternary structure, monomer and homodimer. Part of the essential Sec protein translocation apparatus which comprises SecA, SecYEG and auxiliary proteins SecDF-YajC and YidC. The cofactor is Zn(2+).

It is found in the cell inner membrane. The protein localises to the cytoplasm. It carries out the reaction ATP + H2O + cellular proteinSide 1 = ADP + phosphate + cellular proteinSide 2.. Its function is as follows. Part of the Sec protein translocase complex. Interacts with the SecYEG preprotein conducting channel. Has a central role in coupling the hydrolysis of ATP to the transfer of proteins into and across the cell membrane, serving both as a receptor for the preprotein-SecB complex and as an ATP-driven molecular motor driving the stepwise translocation of polypeptide chains across the membrane. The chain is Protein translocase subunit SecA from Buchnera aphidicola subsp. Acyrthosiphon pisum (strain 5A).